The following is a 309-amino-acid chain: Foldase protein PrsA 2 (309 aa).

Residues 1 to 22 (MKQMNKLITGVVTLATVVTLSA) form the signal peptide. Residue cysteine 23 is the site of N-palmitoyl cysteine attachment. Cysteine 23 is lipidated: S-diacylglycerol cysteine. The PpiC domain occupies 146–241 (TPTMTAEIMQ…RTYHIIKVTK (96 aa)).

This sequence belongs to the PrsA family.

The protein localises to the cell membrane. It carries out the reaction [protein]-peptidylproline (omega=180) = [protein]-peptidylproline (omega=0). In terms of biological role, plays a major role in protein secretion by helping the post-translocational extracellular folding of several secreted proteins. The chain is Foldase protein PrsA 2 from Streptococcus pyogenes serotype M6 (strain ATCC BAA-946 / MGAS10394).